Consider the following 206-residue polypeptide: Large ribosomal subunit protein uL4 (206 aa).

The tract at residues 63 to 98 (MYRQKGTGRARHSSARAPQFRGGGKAHGPVPHSHAH) is disordered. Positions 64–76 (YRQKGTGRARHSS) are enriched in basic residues.

This sequence belongs to the universal ribosomal protein uL4 family. Part of the 50S ribosomal subunit.

One of the primary rRNA binding proteins, this protein initially binds near the 5'-end of the 23S rRNA. It is important during the early stages of 50S assembly. It makes multiple contacts with different domains of the 23S rRNA in the assembled 50S subunit and ribosome. Functionally, forms part of the polypeptide exit tunnel. This Chelativorans sp. (strain BNC1) protein is Large ribosomal subunit protein uL4.